Consider the following 105-residue polypeptide: 5,5'-dehydrodivanillate O-demethylase ferredoxin subunit (105 aa).

The 2Fe-2S ferredoxin-type domain maps to 2–105 (AQLKVVTRDG…GMTVTIAPED (104 aa)). [2Fe-2S] cluster contacts are provided by Cys40, Cys46, Cys49, and Cys86.

This sequence belongs to the adrenodoxin/putidaredoxin family. As to quaternary structure, monomer. The three-component monooxygenase is composed of an oxygenase (LigXa), a ferredoxin (LigXc) and a ferredoxin reductase (LigXd). The cofactor is [2Fe-2S] cluster.

It carries out the reaction 5,5'-dehydrodivanillate + NADH + O2 + H(+) = 2,2',3-trihydroxy-3'-methoxy-5,5'-dicarboxybiphenyl + formaldehyde + NAD(+) + H2O. Involved in the catabolism of 5,5'-dehydrodivanillate (DDVA), an intermediate in the biodegradation of lignin. Part of a three-component monooxygenase that catalyzes the O-demethylation of DDVA, leading to the formation of 2,2',3-trihydroxy-3'-methoxy-5,5'-dicarboxybiphenyl (OH-DDVA). LigXc probably functions as an intermediate electron transfer protein between LigXd and LigXa. This chain is 5,5'-dehydrodivanillate O-demethylase ferredoxin subunit, found in Sphingobium sp. (strain NBRC 103272 / SYK-6).